Here is a 185-residue protein sequence, read N- to C-terminus: Recombination protein RecR (185 aa).

Residues 44–59 form a C4-type zinc finger; sequence CSVCFHLSSEPVCEIC. Positions 67–161 constitute a Toprim domain; sequence NTICVVADSR…KVTRIAFGLP (95 aa).

The protein belongs to the RecR family.

In terms of biological role, may play a role in DNA repair. It seems to be involved in an RecBC-independent recombinational process of DNA repair. It may act with RecF and RecO. In Trichormus variabilis (strain ATCC 29413 / PCC 7937) (Anabaena variabilis), this protein is Recombination protein RecR.